Consider the following 347-residue polypeptide: Phenylalanine--tRNA ligase alpha subunit (347 aa).

Mg(2+) is bound at residue Glu-261.

It belongs to the class-II aminoacyl-tRNA synthetase family. Phe-tRNA synthetase alpha subunit type 1 subfamily. Tetramer of two alpha and two beta subunits. It depends on Mg(2+) as a cofactor.

Its subcellular location is the cytoplasm. The enzyme catalyses tRNA(Phe) + L-phenylalanine + ATP = L-phenylalanyl-tRNA(Phe) + AMP + diphosphate + H(+). The chain is Phenylalanine--tRNA ligase alpha subunit from Streptococcus thermophilus (strain CNRZ 1066).